The sequence spans 156 residues: Small ribosomal subunit protein uS7 (156 aa).

The protein belongs to the universal ribosomal protein uS7 family. In terms of assembly, part of the 30S ribosomal subunit. Contacts proteins S9 and S11.

One of the primary rRNA binding proteins, it binds directly to 16S rRNA where it nucleates assembly of the head domain of the 30S subunit. Is located at the subunit interface close to the decoding center, probably blocks exit of the E-site tRNA. This Magnetococcus marinus (strain ATCC BAA-1437 / JCM 17883 / MC-1) protein is Small ribosomal subunit protein uS7.